Consider the following 170-residue polypeptide: Cyclic pyranopterin monophosphate synthase (170 aa).

The segment at 1–25 (MADPSTLTHPDPEGGVRMMDASQKS) is disordered. Substrate contacts are provided by residues 78-80 (LCH) and 116-117 (ME). Residue Asp-131 is part of the active site.

This sequence belongs to the MoaC family. As to quaternary structure, homohexamer; trimer of dimers.

The enzyme catalyses (8S)-3',8-cyclo-7,8-dihydroguanosine 5'-triphosphate = cyclic pyranopterin phosphate + diphosphate. It functions in the pathway cofactor biosynthesis; molybdopterin biosynthesis. Functionally, catalyzes the conversion of (8S)-3',8-cyclo-7,8-dihydroguanosine 5'-triphosphate to cyclic pyranopterin monophosphate (cPMP). The polypeptide is Cyclic pyranopterin monophosphate synthase (Salinibacter ruber (strain DSM 13855 / M31)).